Consider the following 222-residue polypeptide: 6,7-dimethyl-8-ribityllumazine synthase, chloroplastic (222 aa).

Residues 1–66 (MASFAASQTC…NRASFVVTNA (66 aa)) constitute a chloroplast transit peptide. 5-amino-6-(D-ribitylamino)uracil contacts are provided by residues Phe89, 122–124 (AYE), and 146–148 (AVV). Position 151 to 152 (151 to 152 (DT)) interacts with (2S)-2-hydroxy-3-oxobutyl phosphate. Residue His154 is the Proton donor of the active site. Phe179 contacts 5-amino-6-(D-ribitylamino)uracil. Arg193 lines the (2S)-2-hydroxy-3-oxobutyl phosphate pocket.

The protein belongs to the DMRL synthase family. In terms of assembly, oligomer forming an icosahedral capsid.

Its subcellular location is the plastid. The protein resides in the chloroplast. The catalysed reaction is (2S)-2-hydroxy-3-oxobutyl phosphate + 5-amino-6-(D-ribitylamino)uracil = 6,7-dimethyl-8-(1-D-ribityl)lumazine + phosphate + 2 H2O + H(+). Its pathway is cofactor biosynthesis; riboflavin biosynthesis; riboflavin from 2-hydroxy-3-oxobutyl phosphate and 5-amino-6-(D-ribitylamino)uracil: step 1/2. Catalyzes the formation of 6,7-dimethyl-8-ribityllumazine by condensation of 5-amino-6-(D-ribitylamino)uracil with 3,4-dihydroxy-2-butanone 4-phosphate. This is the penultimate step in the biosynthesis of riboflavin. In Spinacia oleracea (Spinach), this protein is 6,7-dimethyl-8-ribityllumazine synthase, chloroplastic.